A 53-amino-acid chain; its full sequence is UPF0391 membrane protein YtjA (53 aa).

2 consecutive transmembrane segments (helical) span residues 4–24 and 30–48; these read WGII…GGLA and AAKI…SLFM.

This sequence belongs to the UPF0391 family.

It localises to the cell membrane. This is UPF0391 membrane protein YtjA from Salmonella agona (strain SL483).